The following is a 123-amino-acid chain: Ig heavy chain V region H8 (123 aa).

The region spanning 1-114 (EVKLVESGGG…BSYWYFDVWG (114 aa)) is the Ig-like domain.

This Mus musculus (Mouse) protein is Ig heavy chain V region H8.